Reading from the N-terminus, the 456-residue chain is Argininosuccinate lyase (456 aa).

It belongs to the lyase 1 family. Argininosuccinate lyase subfamily.

It is found in the cytoplasm. It catalyses the reaction 2-(N(omega)-L-arginino)succinate = fumarate + L-arginine. It participates in amino-acid biosynthesis; L-arginine biosynthesis; L-arginine from L-ornithine and carbamoyl phosphate: step 3/3. This Shewanella woodyi (strain ATCC 51908 / MS32) protein is Argininosuccinate lyase.